The chain runs to 327 residues: Glutaminase 1 (327 aa).

Residues serine 74, asparagine 126, glutamate 170, asparagine 177, tyrosine 201, tyrosine 253, and valine 271 each coordinate substrate.

Belongs to the glutaminase family. In terms of assembly, homotetramer.

The catalysed reaction is L-glutamine + H2O = L-glutamate + NH4(+). The polypeptide is Glutaminase 1 (glsA1) (Bacillus subtilis (strain 168)).